Here is a 121-residue protein sequence, read N- to C-terminus: Large ribosomal subunit protein uL18 (121 aa).

The protein belongs to the universal ribosomal protein uL18 family. As to quaternary structure, part of the 50S ribosomal subunit; part of the 5S rRNA/L5/L18/L25 subcomplex. Contacts the 5S and 23S rRNAs.

This is one of the proteins that bind and probably mediate the attachment of the 5S RNA into the large ribosomal subunit, where it forms part of the central protuberance. This chain is Large ribosomal subunit protein uL18, found in Pelobacter propionicus (strain DSM 2379 / NBRC 103807 / OttBd1).